The chain runs to 484 residues: HTH-type transcriptional regulator TauR (484 aa).

Positions 16–84 constitute an HTH gntR-type domain; sequence GSLQHRLRQM…GRSGTFVSAA (69 aa). The H-T-H motif DNA-binding region spans 44–63; the sequence is TRALAAHLGVARITVTLAYA. Lysine 330 is subject to N6-(pyridoxal phosphate)lysine.

This sequence in the C-terminal section; belongs to the class-I pyridoxal-phosphate-dependent aminotransferase family. The cofactor is pyridoxal 5'-phosphate.

In terms of biological role, transcriptional activator, which is essential for taurine-dependent expression of the tpa-tauR-xsc operon. Acts by binding to direct repeats in the promoter region. This chain is HTH-type transcriptional regulator TauR, found in Rhodobacter capsulatus (strain ATCC BAA-309 / NBRC 16581 / SB1003).